Consider the following 122-residue polypeptide: Large ribosomal subunit protein uL18 (122 aa).

This sequence belongs to the universal ribosomal protein uL18 family. As to quaternary structure, part of the 50S ribosomal subunit; part of the 5S rRNA/L5/L18/L25 subcomplex. Contacts the 5S and 23S rRNAs.

This is one of the proteins that bind and probably mediate the attachment of the 5S RNA into the large ribosomal subunit, where it forms part of the central protuberance. This chain is Large ribosomal subunit protein uL18, found in Fervidobacterium nodosum (strain ATCC 35602 / DSM 5306 / Rt17-B1).